We begin with the raw amino-acid sequence, 380 residues long: MTSLKTKVIHGGISTDRTTGAVSVPIYQTSTYKQNGLGQPKEYEYSRSGNPTRHALEELIADLEGGVQGFAFSSGLAGIHAVLSLFSAGDHIILADDVYGGTFRLVDKVLTKTGIIYDLVDLSNLEDLKAAFKAETKAVYFETPSNPLLKVLDIKEISSIAKAHNALTLVDNTFATPYLQQPIALGADIVLHSATKYLGGHSDVVAGLVTTNSNELAIEIGFLQNSIGAVLGPQDSWLVQRGIKTLAPRMEAHSANAQKIAEFLEASQAVSKVYYPGLVNHEGHEIAKKQMTAFGGMISFELTDENAVKNFVENLRYFTLAESLGGVESLIEVPAVMTHASIPKELREEIGIKDGLIRLSVGVEALEDLLTDLKEALEKE.

Lysine 196 is subject to N6-(pyridoxal phosphate)lysine.

This sequence belongs to the trans-sulfuration enzymes family. It depends on pyridoxal 5'-phosphate as a cofactor.

It is found in the cytoplasm. The enzyme catalyses L,L-cystathionine + H2O = L-homocysteine + pyruvate + NH4(+). The catalysed reaction is an S-substituted L-cysteine + H2O = a thiol + pyruvate + NH4(+). It functions in the pathway amino-acid biosynthesis; L-methionine biosynthesis via de novo pathway; L-homocysteine from L-cystathionine: step 1/1. Functionally, the enzymatic degradation of amino acids in cheese is believed to generate aroma compounds and therefore to be essential for flavor development. Cystathionine beta-lyase (CBL) can convert cystathionine to homocysteine but is also able to catalyze an alpha, gamma elimination. With methionine as a substrate, it produces volatile sulfur compounds which are important for flavor formation in Gouda cheese. The polypeptide is Cystathionine beta-lyase (metC) (Lactococcus lactis subsp. cremoris (Streptococcus cremoris)).